The primary structure comprises 634 residues: Threonine--tRNA ligase (634 aa).

Positions 1–142 (MQLLLIHSDY…LSRSIRPEGA (142 aa)) are editing domain. Residues 214–513 (PHVELMRRLE…TEEGKVPMLP (300 aa)) form a catalytic region. 3 residues coordinate Zn(2+): C306, H358, and H482.

Belongs to the class-II aminoacyl-tRNA synthetase family. Homodimer. Zn(2+) is required as a cofactor.

It is found in the cytoplasm. It carries out the reaction tRNA(Thr) + L-threonine + ATP = L-threonyl-tRNA(Thr) + AMP + diphosphate + H(+). Catalyzes the attachment of threonine to tRNA(Thr) in a two-step reaction: L-threonine is first activated by ATP to form Thr-AMP and then transferred to the acceptor end of tRNA(Thr). Edits incorrectly charged L-seryl-tRNA(Thr) probably via its editing domain (tested with total bovine tRNA). Activates L-serine, but does not detectably transfer it to tRNA (tested with total bovine tRNA). The polypeptide is Threonine--tRNA ligase (Methanosarcina mazei (strain ATCC BAA-159 / DSM 3647 / Goe1 / Go1 / JCM 11833 / OCM 88) (Methanosarcina frisia)).